The primary structure comprises 301 residues: 4-hydroxy-tetrahydrodipicolinate synthase (301 aa).

Thr46 is a pyruvate binding site. Catalysis depends on Tyr134, which acts as the Proton donor/acceptor. The active-site Schiff-base intermediate with substrate is the Lys162. Ile203 is a pyruvate binding site.

It belongs to the DapA family. As to quaternary structure, homotetramer; dimer of dimers.

The protein localises to the cytoplasm. The catalysed reaction is L-aspartate 4-semialdehyde + pyruvate = (2S,4S)-4-hydroxy-2,3,4,5-tetrahydrodipicolinate + H2O + H(+). Its pathway is amino-acid biosynthesis; L-lysine biosynthesis via DAP pathway; (S)-tetrahydrodipicolinate from L-aspartate: step 3/4. In terms of biological role, catalyzes the condensation of (S)-aspartate-beta-semialdehyde [(S)-ASA] and pyruvate to 4-hydroxy-tetrahydrodipicolinate (HTPA). This is 4-hydroxy-tetrahydrodipicolinate synthase from Anaplasma marginale (strain St. Maries).